Reading from the N-terminus, the 1096-residue chain is Cation-transporting ATPase 5 (1096 aa).

The Cytoplasmic portion of the chain corresponds to Met-1–Thr-19. Residues Pro-20–Phe-41 form a helical membrane-spanning segment. Residues Lys-42–Lys-47 lie on the Lumenal side of the membrane. Residues Val-48–Pro-70 traverse the membrane as a helical segment. Residues Glu-71–Thr-193 are Cytoplasmic-facing. The helical transmembrane segment at Ile-194 to Cys-216 threads the bilayer. At Asp-217–Val-220 the chain is on the lumenal side. The chain crosses the membrane as a helical span at residues Phe-221–Val-238. Topologically, residues Lys-239–Asp-391 are cytoplasmic. A helical transmembrane segment spans residues Ser-392 to Ile-412. Residues Tyr-413–Val-425 are Lumenal-facing. Residues Leu-426–Gly-447 form a helical membrane-spanning segment. The Cytoplasmic portion of the chain corresponds to Ile-448–Gln-895. Catalysis depends on Asp-480, which acts as the 4-aspartylphosphate intermediate. Positions 838 and 842 each coordinate Mg(2+). Residues Tyr-896–Asn-915 traverse the membrane as a helical segment. Residues Tyr-916–Gln-922 lie on the Lumenal side of the membrane. Residues Phe-923–Tyr-940 form a helical membrane-spanning segment. Topologically, residues Phe-941–Gly-958 are cytoplasmic. The helical transmembrane segment at Lys-959–Ile-982 threads the bilayer. Over Leu-983–Asn-1003 the chain is Lumenal. Residues Val-1004–Gln-1026 form a helical membrane-spanning segment. The Cytoplasmic portion of the chain corresponds to Ser-1027–Tyr-1040. The helical transmembrane segment at Val-1041 to Asn-1060 threads the bilayer. Residues His-1061–Leu-1075 lie on the Lumenal side of the membrane. Residues Tyr-1076–Met-1096 form a helical membrane-spanning segment.

This sequence belongs to the cation transport ATPase (P-type) (TC 3.A.3) family. Type V subfamily.

The protein resides in the endoplasmic reticulum membrane. It is found in the golgi apparatus membrane. The enzyme catalyses ATP + H2O = ADP + phosphate + H(+). Its function is as follows. Plays a role in regulating calcium and manganese homeostasis responsible for cell cycle progression. The protein is Cation-transporting ATPase 5 (cta5) of Schizosaccharomyces pombe (strain 972 / ATCC 24843) (Fission yeast).